A 427-amino-acid polypeptide reads, in one-letter code: Septin-6 (427 aa).

Residue A2 is modified to N-acetylalanine. S27 is subject to Phosphoserine. The Septin-type G domain occupies 39 to 305 (QGFCFNILCV…ELYRRCKLEE (267 aa)). Residues 49 to 56 (GETGLGKS) are G1 motif. GTP is bound by residues 49 to 56 (GETGLGKS), G104, 185 to 193 (KSDAISKSE), G239, and R254. A G3 motif region spans residues 101-104 (STVG). Residues 184–187 (AKSD) form a G4 motif region. Positions 321–416 (QETYEAKRNE…QSQGSQAGGS (96 aa)) form a coiled coil. At K367 the chain carries N6-acetyllysine. Residues 405 to 427 (LLQSQGSQAGGSQTLKRDKEKKN) are disordered. Residues 407-417 (QSQGSQAGGSQ) show a composition bias toward low complexity. Phosphoserine is present on S416. T418 is modified (phosphothreonine).

Belongs to the TRAFAC class TrmE-Era-EngA-EngB-Septin-like GTPase superfamily. Septin GTPase family. Septins polymerize into heterooligomeric protein complexes that form filaments, and associate with cellular membranes, actin filaments and microtubules. GTPase activity is required for filament formation. Filaments are assembled from asymmetrical heterotrimers, composed of SEPTIN2, SEPTIN6 and SEPTIN7 that associate head-to-head to form a hexameric unit. Within the trimer, directly interacts with SEPTIN2 and SEPTIN7. Also interacts with SEPTIN9 and SEPTIN12. Interaction with SEPTIN12 alters filament structure. Component of a septin core octameric complex consisting of SEPTIN12, SEPTIN7, SEPTIN6 and SEPTIN2 or SEPTIN4 in the order 12-7-6-2-2-6-7-12 or 12-7-6-4-4-6-7-12 and located in the sperm annulus. Interacts with SOCS7. Interacts with HNRNPA1.

The protein localises to the cytoplasm. It is found in the cytoskeleton. It localises to the spindle. Its subcellular location is the chromosome. The protein resides in the centromere. The protein localises to the kinetochore. It is found in the cleavage furrow. It localises to the midbody. Its subcellular location is the cell projection. The protein resides in the cilium. The protein localises to the flagellum. In terms of biological role, filament-forming cytoskeletal GTPase. Required for normal organization of the actin cytoskeleton. Involved in cytokinesis. Forms a filamentous structure with SEPTIN12, SEPTIN6, SEPTIN2 and probably SEPTIN4 at the sperm annulus which is required for the structural integrity and motility of the sperm tail during postmeiotic differentiation. This is Septin-6 from Bos taurus (Bovine).